We begin with the raw amino-acid sequence, 214 residues long: Large ribosomal subunit protein bL25 (214 aa).

Residues 178–214 are disordered; the sequence is VEPEEEELPETDEEGEGAEGEAAEAAEGESAEGESEE. The segment covering 179-214 has biased composition (acidic residues); the sequence is EPEEEELPETDEEGEGAEGEAAEAAEGESAEGESEE.

This sequence belongs to the bacterial ribosomal protein bL25 family. CTC subfamily. In terms of assembly, part of the 50S ribosomal subunit; part of the 5S rRNA/L5/L18/L25 subcomplex. Contacts the 5S rRNA. Binds to the 5S rRNA independently of L5 and L18.

Its function is as follows. This is one of the proteins that binds to the 5S RNA in the ribosome where it forms part of the central protuberance. In Corynebacterium jeikeium (strain K411), this protein is Large ribosomal subunit protein bL25.